The chain runs to 446 residues: Methylenetetrahydrofolate--tRNA-(uracil-5-)-methyltransferase TrmFO (446 aa).

8–13 (GAGLAG) is a binding site for FAD.

Belongs to the MnmG family. TrmFO subfamily. FAD is required as a cofactor.

The protein resides in the cytoplasm. The catalysed reaction is uridine(54) in tRNA + (6R)-5,10-methylene-5,6,7,8-tetrahydrofolate + NADH + H(+) = 5-methyluridine(54) in tRNA + (6S)-5,6,7,8-tetrahydrofolate + NAD(+). It catalyses the reaction uridine(54) in tRNA + (6R)-5,10-methylene-5,6,7,8-tetrahydrofolate + NADPH + H(+) = 5-methyluridine(54) in tRNA + (6S)-5,6,7,8-tetrahydrofolate + NADP(+). Functionally, catalyzes the folate-dependent formation of 5-methyl-uridine at position 54 (M-5-U54) in all tRNAs. This Paracoccus denitrificans (strain Pd 1222) protein is Methylenetetrahydrofolate--tRNA-(uracil-5-)-methyltransferase TrmFO.